We begin with the raw amino-acid sequence, 370 residues long: Flagellar P-ring protein 1 (370 aa).

Residues 1–25 (MSVLIKTRHCFVLLGLWLVLPTASA) form the signal peptide.

It belongs to the FlgI family. In terms of assembly, the basal body constitutes a major portion of the flagellar organelle and consists of four rings (L,P,S, and M) mounted on a central rod.

The protein resides in the periplasm. It is found in the bacterial flagellum basal body. In terms of biological role, assembles around the rod to form the L-ring and probably protects the motor/basal body from shearing forces during rotation. The chain is Flagellar P-ring protein 1 from Yersinia pestis.